The primary structure comprises 65 residues: Large ribosomal subunit protein bL35c (65 aa).

Belongs to the bacterial ribosomal protein bL35 family.

The protein resides in the plastid. It localises to the cyanelle. In Cyanophora paradoxa, this protein is Large ribosomal subunit protein bL35c (rpl35).